We begin with the raw amino-acid sequence, 601 residues long: Methionine--tRNA ligase (601 aa).

Residues 21 to 31 carry the 'HIGH' region motif; the sequence is PYANGPRHIGH. Positions 153, 156, 166, and 169 each coordinate Zn(2+). ATP is bound at residue Asn-361.

Belongs to the class-I aminoacyl-tRNA synthetase family. MetG type 1 subfamily. Monomer. It depends on Zn(2+) as a cofactor.

The protein localises to the cytoplasm. The catalysed reaction is tRNA(Met) + L-methionine + ATP = L-methionyl-tRNA(Met) + AMP + diphosphate. Is required not only for elongation of protein synthesis but also for the initiation of all mRNA translation through initiator tRNA(fMet) aminoacylation. This chain is Methionine--tRNA ligase, found in Cutibacterium acnes (strain DSM 16379 / KPA171202) (Propionibacterium acnes).